The chain runs to 240 residues: Uridylate kinase (240 aa).

An ATP-binding site is contributed by 12 to 15; it reads KLSG. The interval 20–25 is involved in allosteric activation by GTP; it reads GDQGKG. Gly-54 is a binding site for UMP. The ATP site is built by Gly-55 and Arg-59. Residues Asp-74 and 135–142 each bind UMP; that span reads TGSPYFST. The ATP site is built by Asn-163, Tyr-169, and Asp-172.

The protein belongs to the UMP kinase family. Homohexamer.

Its subcellular location is the cytoplasm. The enzyme catalyses UMP + ATP = UDP + ADP. The protein operates within pyrimidine metabolism; CTP biosynthesis via de novo pathway; UDP from UMP (UMPK route): step 1/1. Its activity is regulated as follows. Allosterically activated by GTP. Inhibited by UTP. In terms of biological role, catalyzes the reversible phosphorylation of UMP to UDP. This is Uridylate kinase from Ligilactobacillus salivarius (strain UCC118) (Lactobacillus salivarius).